The chain runs to 218 residues: Ribose-5-phosphate isomerase A (218 aa).

Substrate-binding positions include 28 to 31, 81 to 84, and 94 to 97; these read TGST, DGAD, and KGGG. Glutamate 103 serves as the catalytic Proton acceptor. Residue lysine 121 participates in substrate binding.

The protein belongs to the ribose 5-phosphate isomerase family. As to quaternary structure, homodimer.

It carries out the reaction aldehydo-D-ribose 5-phosphate = D-ribulose 5-phosphate. It functions in the pathway carbohydrate degradation; pentose phosphate pathway; D-ribose 5-phosphate from D-ribulose 5-phosphate (non-oxidative stage): step 1/1. Catalyzes the reversible conversion of ribose-5-phosphate to ribulose 5-phosphate. This chain is Ribose-5-phosphate isomerase A, found in Yersinia pseudotuberculosis serotype IB (strain PB1/+).